We begin with the raw amino-acid sequence, 308 residues long: Tyramine--L-glutamate ligase (308 aa).

The region spanning 89–291 (KSLLKSENID…LAELLIKNAN (203 aa)) is the ATP-grasp domain. 115-192 (TKIIESYPVK…QEFIDGENLS (78 aa)) is a binding site for ATP. Mg(2+) contacts are provided by aspartate 252, glutamate 264, and asparagine 266. The Mn(2+) site is built by aspartate 252, glutamate 264, and asparagine 266.

Mg(2+) serves as cofactor. It depends on Mn(2+) as a cofactor.

It catalyses the reaction tyramine + L-glutamate + ATP = gamma-L-glutamyltyramine + ADP + phosphate + H(+). It participates in cofactor biosynthesis; methanofuran biosynthesis. Functionally, catalyzes the formation of an amide bond between tyramine and the gamma carboxy group of L-glutamate. The enzyme also accepts phenylethylamine in vitro. The polypeptide is Tyramine--L-glutamate ligase (mfnD) (Methanocaldococcus jannaschii (strain ATCC 43067 / DSM 2661 / JAL-1 / JCM 10045 / NBRC 100440) (Methanococcus jannaschii)).